A 957-amino-acid chain; its full sequence is Glycine dehydrogenase (decarboxylating) 2 (957 aa).

An N6-(pyridoxal phosphate)lysine modification is found at Lys-707.

The protein belongs to the GcvP family. The glycine cleavage system is composed of four proteins: P, T, L and H. Pyridoxal 5'-phosphate serves as cofactor.

It catalyses the reaction N(6)-[(R)-lipoyl]-L-lysyl-[glycine-cleavage complex H protein] + glycine + H(+) = N(6)-[(R)-S(8)-aminomethyldihydrolipoyl]-L-lysyl-[glycine-cleavage complex H protein] + CO2. In terms of biological role, the glycine cleavage system catalyzes the degradation of glycine. The P protein binds the alpha-amino group of glycine through its pyridoxal phosphate cofactor; CO(2) is released and the remaining methylamine moiety is then transferred to the lipoamide cofactor of the H protein. This chain is Glycine dehydrogenase (decarboxylating) 2, found in Pseudomonas fluorescens (strain Pf0-1).